Reading from the N-terminus, the 317-residue chain is Adenosine receptor A3 (317 aa).

Residues 1 to 14 (MPVNSTAVSLASVT) lie on the Extracellular side of the membrane. N-linked (GlcNAc...) asparagine glycosylation occurs at N4. Residues 15–37 (YISVEILIGLCAIVGNVLVIWVV) form a helical membrane-spanning segment. At 38-48 (KLNPSLQTTTF) the chain is on the cytoplasmic side. A helical transmembrane segment spans residues 49–72 (YFIVSLALADIAVGVLVMPLAIVI). Over 73-84 (SLGVTIHFYSCL) the chain is Extracellular. The cysteines at positions 83 and 165 are disulfide-linked. The helical transmembrane segment at 85 to 106 (LMTCLLMIFTHASIMSLLAIAV) threads the bilayer. Over 107-126 (DRYLRVKLTVRYRRVTTQRR) the chain is Cytoplasmic. A helical membrane pass occupies residues 127–148 (IWLALGLCWLVSFLVGLTPMFG). Over 149–176 (WNMKLSSADKNLTFLPCQFRSVMRMDYM) the chain is Extracellular. The chain crosses the membrane as a helical span at residues 177–197 (VYFSFFTWILIPLVVMCAIYF). The Cytoplasmic segment spans residues 198–230 (DIFYVIRNRLSQNFSGSKETGAFYGREFKTAKS). The helical transmembrane segment at 231–254 (LSLVLFLFALSWLPLSIINCIIYF) threads the bilayer. The Extracellular portion of the chain corresponds to 255 to 260 (NGEVPQ). Residues 261–283 (IVLYLGILLSHANSMMNPIVYAY) traverse the membrane as a helical segment. Residues 284–317 (KIKKFKETYLLILKACVICQPSKSMDPSIEQTSE) lie on the Cytoplasmic side of the membrane. C302 carries the S-palmitoyl cysteine lipid modification.

Belongs to the G-protein coupled receptor 1 family. Phosphorylation on Thr-315 and Ser-316 may be crucial for rapid desensitization. Phosphorylation on Thr-315 may be necessary for phosphorylation on Ser-316 to occur.

The protein localises to the cell membrane. Its function is as follows. Receptor for adenosine. The activity of this receptor is mediated by G proteins which inhibits adenylyl cyclase. The protein is Adenosine receptor A3 (ADORA3) of Bos taurus (Bovine).